A 144-amino-acid chain; its full sequence is Large ribosomal subunit protein uL15 (144 aa).

Residues 1–52 are disordered; the sequence is MYLNTISPMKKSNHSSKRKGRGIGSGKGKTSGRGHKGQRSRSGGKVRRGFEG. 2 stretches are compositionally biased toward basic residues: residues 11 to 21 and 30 to 47; these read KSNHSSKRKGR and TSGR…GKVR.

Belongs to the universal ribosomal protein uL15 family. As to quaternary structure, part of the 50S ribosomal subunit.

In terms of biological role, binds to the 23S rRNA. The sequence is that of Large ribosomal subunit protein uL15 from Wigglesworthia glossinidia brevipalpis.